Reading from the N-terminus, the 358-residue chain is 3-isopropylmalate dehydrogenase (358 aa).

76-89 (GPRWDNLTGAERPE) lines the NAD(+) pocket. Substrate is bound by residues Arg-96, Arg-106, Arg-135, and Asp-225. Mg(2+) is bound by residues Asp-225, Asp-249, and Asp-253. 283 to 295 (GSAPDIAGQNKAN) is a binding site for NAD(+).

This sequence belongs to the isocitrate and isopropylmalate dehydrogenases family. LeuB type 1 subfamily. Homodimer. Mg(2+) is required as a cofactor. Requires Mn(2+) as cofactor.

It localises to the cytoplasm. The catalysed reaction is (2R,3S)-3-isopropylmalate + NAD(+) = 4-methyl-2-oxopentanoate + CO2 + NADH. Its pathway is amino-acid biosynthesis; L-leucine biosynthesis; L-leucine from 3-methyl-2-oxobutanoate: step 3/4. Its function is as follows. Catalyzes the oxidation of 3-carboxy-2-hydroxy-4-methylpentanoate (3-isopropylmalate) to 3-carboxy-4-methyl-2-oxopentanoate. The product decarboxylates to 4-methyl-2 oxopentanoate. This is 3-isopropylmalate dehydrogenase from Oleidesulfovibrio alaskensis (strain ATCC BAA-1058 / DSM 17464 / G20) (Desulfovibrio alaskensis).